Reading from the N-terminus, the 199-residue chain is Secreted chorismate mutase (199 aa).

Residues 1-33 form the signal peptide; it reads MLTRPREIYLATAVSIGILLSLIAPLGPPLARA. The region spanning 34–113 is the Chorismate mutase domain; it reads DGTSQLAELV…ATEAIEYSRF (80 aa). Substrate contacts are provided by residues Arg-49, Lys-60, Asp-69, 72–76, 105–109, and Arg-134; these read RVEQQ and TEAIE. A disulfide bridge connects residues Cys-160 and Cys-193.

As to quaternary structure, homodimer.

Its subcellular location is the secreted. It carries out the reaction chorismate = prephenate. It functions in the pathway metabolic intermediate biosynthesis; prephenate biosynthesis; prephenate from chorismate: step 1/1. Its activity is regulated as follows. Tyrosine, phenylalanine, and tryptophan moderately enhance chorismate mutase activity at low concentrations, but allosterically inhibit the enzyme at higher concentrations. Catalyzes the Claisen rearrangement of chorismate to prephenate. May play some role in the pathogenicity. This Mycobacterium tuberculosis (strain ATCC 25618 / H37Rv) protein is Secreted chorismate mutase.